Here is a 331-residue protein sequence, read N- to C-terminus: Anthranilate phosphoribosyltransferase (331 aa).

Residues Gly79, 82-83 (GD), Ser87, 89-92 (NIST), 107-115 (KHCNGNISS), and Ser119 each bind 5-phospho-alpha-D-ribose 1-diphosphate. An anthranilate-binding site is contributed by Gly79. Ser91 is a binding site for Mg(2+). Asn110 lines the anthranilate pocket. Arg165 contributes to the anthranilate binding site. Asp223 and Glu224 together coordinate Mg(2+).

This sequence belongs to the anthranilate phosphoribosyltransferase family. As to quaternary structure, homodimer. The cofactor is Mg(2+).

It catalyses the reaction N-(5-phospho-beta-D-ribosyl)anthranilate + diphosphate = 5-phospho-alpha-D-ribose 1-diphosphate + anthranilate. Its pathway is amino-acid biosynthesis; L-tryptophan biosynthesis; L-tryptophan from chorismate: step 2/5. Functionally, catalyzes the transfer of the phosphoribosyl group of 5-phosphorylribose-1-pyrophosphate (PRPP) to anthranilate to yield N-(5'-phosphoribosyl)-anthranilate (PRA). In Buchnera aphidicola subsp. Baizongia pistaciae (strain Bp), this protein is Anthranilate phosphoribosyltransferase.